The sequence spans 94 residues: Pyrimidine/purine nucleoside phosphorylase (94 aa).

This sequence belongs to the nucleoside phosphorylase PpnP family.

The catalysed reaction is a purine D-ribonucleoside + phosphate = a purine nucleobase + alpha-D-ribose 1-phosphate. The enzyme catalyses adenosine + phosphate = alpha-D-ribose 1-phosphate + adenine. It catalyses the reaction cytidine + phosphate = cytosine + alpha-D-ribose 1-phosphate. It carries out the reaction guanosine + phosphate = alpha-D-ribose 1-phosphate + guanine. The catalysed reaction is inosine + phosphate = alpha-D-ribose 1-phosphate + hypoxanthine. The enzyme catalyses thymidine + phosphate = 2-deoxy-alpha-D-ribose 1-phosphate + thymine. It catalyses the reaction uridine + phosphate = alpha-D-ribose 1-phosphate + uracil. It carries out the reaction xanthosine + phosphate = alpha-D-ribose 1-phosphate + xanthine. Functionally, catalyzes the phosphorolysis of diverse nucleosides, yielding D-ribose 1-phosphate and the respective free bases. Can use uridine, adenosine, guanosine, cytidine, thymidine, inosine and xanthosine as substrates. Also catalyzes the reverse reactions. This chain is Pyrimidine/purine nucleoside phosphorylase, found in Cronobacter sakazakii (strain ATCC BAA-894) (Enterobacter sakazakii).